A 215-amino-acid polypeptide reads, in one-letter code: uncharacterized protein (215 aa).

This sequence belongs to the mimivirus L31/R44 family.

This is an uncharacterized protein from Acanthamoeba polyphaga (Amoeba).